The sequence spans 123 residues: Ribosome-binding factor A (123 aa).

It belongs to the RbfA family. As to quaternary structure, monomer. Binds 30S ribosomal subunits, but not 50S ribosomal subunits or 70S ribosomes.

The protein localises to the cytoplasm. In terms of biological role, one of several proteins that assist in the late maturation steps of the functional core of the 30S ribosomal subunit. Associates with free 30S ribosomal subunits (but not with 30S subunits that are part of 70S ribosomes or polysomes). Required for efficient processing of 16S rRNA. May interact with the 5'-terminal helix region of 16S rRNA. The sequence is that of Ribosome-binding factor A from Cupriavidus taiwanensis (strain DSM 17343 / BCRC 17206 / CCUG 44338 / CIP 107171 / LMG 19424 / R1) (Ralstonia taiwanensis (strain LMG 19424)).